The primary structure comprises 246 residues: Uridylate kinase (246 aa).

13–16 (KLSG) is an ATP binding site. Gly54 provides a ligand contact to UMP. ATP-binding residues include Gly55 and Arg59. UMP-binding positions include Asp74 and 135–142 (AGMPYFST). The ATP site is built by Asn163, Tyr169, and Asp172.

Belongs to the UMP kinase family. In terms of assembly, homohexamer.

Its subcellular location is the cytoplasm. The catalysed reaction is UMP + ATP = UDP + ADP. It functions in the pathway pyrimidine metabolism; CTP biosynthesis via de novo pathway; UDP from UMP (UMPK route): step 1/1. Inhibited by UTP. Functionally, catalyzes the reversible phosphorylation of UMP to UDP. This is Uridylate kinase from Bifidobacterium longum (strain NCC 2705).